The primary structure comprises 523 residues: Peptide chain release factor 3 (523 aa).

The 268-residue stretch at 8–275 folds into the tr-type G domain; that stretch reads KKRRTFAIIS…TFLEYAPEPH (268 aa). Residues 17–24, 85–89, and 139–142 contribute to the GTP site; these read SHPDAGKT, DTPGH, and NKLD.

This sequence belongs to the TRAFAC class translation factor GTPase superfamily. Classic translation factor GTPase family. PrfC subfamily.

The protein localises to the cytoplasm. Functionally, increases the formation of ribosomal termination complexes and stimulates activities of RF-1 and RF-2. It binds guanine nucleotides and has strong preference for UGA stop codons. It may interact directly with the ribosome. The stimulation of RF-1 and RF-2 is significantly reduced by GTP and GDP, but not by GMP. The sequence is that of Peptide chain release factor 3 from Lactococcus lactis subsp. cremoris (strain SK11).